A 161-amino-acid polypeptide reads, in one-letter code: uncharacterized protein (161 aa).

An N-terminal signal peptide occupies residues 1–35 (MVMAMGFDTVVAAIMATAIIVAVAYTFLAGSTSIA).

This is an uncharacterized protein from Archaeoglobus fulgidus (strain ATCC 49558 / DSM 4304 / JCM 9628 / NBRC 100126 / VC-16).